The primary structure comprises 315 residues: Acetyl-coenzyme A carboxylase carboxyl transferase subunit alpha (315 aa).

The region spanning 40–293 (LQDKSKTLTE…REELSSQLAM (254 aa)) is the CoA carboxyltransferase C-terminal domain.

The protein belongs to the AccA family. Acetyl-CoA carboxylase is a heterohexamer composed of biotin carboxyl carrier protein (AccB), biotin carboxylase (AccC) and two subunits each of ACCase subunit alpha (AccA) and ACCase subunit beta (AccD).

It is found in the cytoplasm. The enzyme catalyses N(6)-carboxybiotinyl-L-lysyl-[protein] + acetyl-CoA = N(6)-biotinyl-L-lysyl-[protein] + malonyl-CoA. Its pathway is lipid metabolism; malonyl-CoA biosynthesis; malonyl-CoA from acetyl-CoA: step 1/1. In terms of biological role, component of the acetyl coenzyme A carboxylase (ACC) complex. First, biotin carboxylase catalyzes the carboxylation of biotin on its carrier protein (BCCP) and then the CO(2) group is transferred by the carboxyltransferase to acetyl-CoA to form malonyl-CoA. The sequence is that of Acetyl-coenzyme A carboxylase carboxyl transferase subunit alpha from Pseudomonas syringae pv. syringae (strain B728a).